The sequence spans 28 residues: Kalata-B12 (28 aa).

A cross-link (cyclopeptide (Gly-Asp)) is located at residues 1 to 28 (GSLCGDTCFVLGCNDSSCSCNYPICVKD). 3 disulfides stabilise this stretch: cysteine 4–cysteine 18, cysteine 8–cysteine 20, and cysteine 13–cysteine 25.

In terms of processing, this is a cyclic peptide.

Its function is as follows. Probably participates in a plant defense mechanism. The protein is Kalata-B12 of Oldenlandia affinis.